Consider the following 350-residue polypeptide: MPQSVPLFQIEPVSKAQDQLIQQKIDLKTKPPGALGQLESLALQIARIQGAKQLQIVYPTMLVFAGDHGIAAEGVSIAPSEVTRQMVQNFAHGGAAINVFCRQLGFNLEVIDCGILTPVEDAEGIIDQRLGAGTAAIHLEPAMTLACVDKGFAMAQALIERHHQAGCNLVAFGEMGIGNTSSAAAIMAAIMQLDVADCVGRGTGINSETLERKQMLIELALLLHQSAMTGPRQVLACLGGFEIVQMTGAMLAAAERKMLVVVDGFIATAAALVAVSINANVRDYLIFAHRSEEQGHQRMLEHLKAKPLLSLGLRLGEGTGAALALPLIQAAVNFYNQMASFSDAGIEAVV.

Catalysis depends on Glu317, which acts as the Proton acceptor.

This sequence belongs to the CobT family.

The catalysed reaction is 5,6-dimethylbenzimidazole + nicotinate beta-D-ribonucleotide = alpha-ribazole 5'-phosphate + nicotinate + H(+). The protein operates within nucleoside biosynthesis; alpha-ribazole biosynthesis; alpha-ribazole from 5,6-dimethylbenzimidazole: step 1/2. Catalyzes the synthesis of alpha-ribazole-5'-phosphate from nicotinate mononucleotide (NAMN) and 5,6-dimethylbenzimidazole (DMB). This Shewanella sp. (strain ANA-3) protein is Nicotinate-nucleotide--dimethylbenzimidazole phosphoribosyltransferase.